The chain runs to 113 residues: Cell cycle control protein 50C (113 aa).

Residues 1-34 (MEERAQHCLSRLLDNSALKQQELPIHRLYFTARR) are Cytoplasmic-facing. Residues 35 to 55 (VLFVFFATGIFCLCMGIILIL) form a helical membrane-spanning segment. Residues 56–113 (SARSTQEIEINYTRICANCAKLRENASNFDKECTCSIPFYLSGKMMVGEIQETRLTLH) lie on the Extracellular side of the membrane. N-linked (GlcNAc...) asparagine glycosylation occurs at Asn-66.

Belongs to the CDC50/LEM3 family. As to expression, specifically expressed in testis.

Its subcellular location is the membrane. This is Cell cycle control protein 50C from Homo sapiens (Human).